The chain runs to 255 residues: Post-GPI attachment to proteins factor 2 (255 aa).

A run of 6 helical transmembrane segments spans residues 25-45 (LAAL…SLLF), 80-100 (LAIF…LEYY), 111-131 (LGIL…CLSF), 143-163 (NAFV…YLLN), 185-205 (LFLV…RHNA), and 209-229 (AGVY…NMGF).

It belongs to the PGAP2 family.

It is found in the golgi apparatus membrane. Its subcellular location is the endoplasmic reticulum membrane. Involved in the lipid remodeling steps of GPI-anchor maturation. Required for stable expression of GPI-anchored proteins at the cell surface. This chain is Post-GPI attachment to proteins factor 2, found in Drosophila pseudoobscura pseudoobscura (Fruit fly).